Here is a 390-residue protein sequence, read N- to C-terminus: Nucleotide-sugar uncharacterized transporter 1 (390 aa).

The next 10 membrane-spanning stretches (helical) occupy residues 61 to 81 (ICGP…IIFM), 89 to 109 (IGFE…YLLM), 128 to 148 (SLLP…LANV), 155 to 175 (VGFY…AEFL), 182 to 201 (SFMK…VATV), 206 to 228 (FSLF…KILW), 249 to 269 (ITLL…ALSF), 278 to 298 (AILV…LALG), 306 to 326 (VVLG…IFGS), and 329 to 349 (GFIS…YTYL). A compositionally biased stretch (low complexity) spans 356–365 (LKTSSSSSAL). The tract at residues 356–390 (LKTSSSSSALSEKKSRFSDLKDDDKNLEPYGSEAV) is disordered. Residues 366 to 382 (SEKKSRFSDLKDDDKNL) show a composition bias toward basic and acidic residues.

The protein belongs to the TPT transporter family. TPT (TC 2.A.7.9) subfamily.

The protein resides in the membrane. This chain is Nucleotide-sugar uncharacterized transporter 1, found in Arabidopsis thaliana (Mouse-ear cress).